The chain runs to 565 residues: MQAFVQFLGSNPYILLFLTIGLAVWVGKFSIKGYGLGAVAAAIVVGCLVATVGAAYGVKFHLDEFAKSLLYYLFMYGVGLRVGPSFVNALNKESINYAILAIIAPILGLAIVVLGTQFFGLPLGAAGGMLAGSQTMSAAIGSAEQAVSAGVLSLGSESPEQISAMIALSYGITYIWGTVGIILLCKYLPRIWGVDAKAAALEFEKAHGVPNVDDAGLTAFHPFDLRAYRVENPESIGKTVQQFRTRFPQYQVVNVERGDQLLGPSAETVLQQGDVVALGGRLEEMTANMGVLGPEVPDARALNIPLDQAEILVTNKEVTGRPLKTFRGSELAGQIQLQRVERSGVPLPIGLETTLQKRDVLFVTGLQPAVSKAGEIFGVIARHSSATDLLTLSFGMILGFLIGLIEVPAFGAKVGLGNAGGLLLSGIIVSSISSRLRFFGNTPNAARNILEDLGLIGFVAIVGINAGADLLTQLTGAIALKIFIVGFLASTIPPIIVWAIGFHIMKINPALLMGATAGARSHSGPAREAAKEVGSSVPWLGFPVGYAVSGVLLTVFGYFAMVLAH.

5 helical membrane passes run 4 to 26, 33 to 55, 68 to 90, 97 to 119, and 162 to 184; these read FVQF…AVWV, GYGL…VGAA, SLLY…VNAL, YAIL…TQFF, and ISAM…IILL. 2 consecutive RCK C-terminal domains span residues 210–295 and 296–379; these read PNVD…LGPE and VPDA…IFGV. Helical transmembrane passes span 389 to 411, 415 to 432, 453 to 472, 482 to 504, and 539 to 561; these read LLTL…PAFG, GLGN…VSSI, LGLI…DLLT, IFIV…GFHI, and WLGF…YFAM.

The protein belongs to the AAE transporter (TC 2.A.81) family.

The protein resides in the cell membrane. This is an uncharacterized protein from Bordetella bronchiseptica (strain ATCC BAA-588 / NCTC 13252 / RB50) (Alcaligenes bronchisepticus).